Here is a 614-residue protein sequence, read N- to C-terminus: Elongation factor 4 (614 aa).

Residues 10–192 enclose the tr-type G domain; that stretch reads ALIRNFCIIA…EIVARIPPPV (183 aa). GTP contacts are provided by residues 22–27 and 139–142; these read DHGKST and NKID.

This sequence belongs to the TRAFAC class translation factor GTPase superfamily. Classic translation factor GTPase family. LepA subfamily.

Its subcellular location is the cell membrane. The enzyme catalyses GTP + H2O = GDP + phosphate + H(+). Functionally, required for accurate and efficient protein synthesis under certain stress conditions. May act as a fidelity factor of the translation reaction, by catalyzing a one-codon backward translocation of tRNAs on improperly translocated ribosomes. Back-translocation proceeds from a post-translocation (POST) complex to a pre-translocation (PRE) complex, thus giving elongation factor G a second chance to translocate the tRNAs correctly. Binds to ribosomes in a GTP-dependent manner. The sequence is that of Elongation factor 4 from Thermobifida fusca (strain YX).